We begin with the raw amino-acid sequence, 265 residues long: MAAFRMGKLTTIPAGLIYASINVRLAKEEEPKKQLVRPDQLPIYTAPPLHSKYVEEQPGNLQRGFASIRTTTVYYIGWCKSIYLFMKNGVMDTVQFGKDAYVYLKNPPQDFLPKMGVITASGLAGLLSARKGSRFKKIAYPLGLATLGATVCYPAQSVIIAKITGKKAYATSQQIFQAIKSLWTQKSENESLPEPKEESKEGRSDEIHASLPDLKHSVSLPKELASATVIKSESTSGTTQFIPDPKLMDHGQSHPDDKDMYSTRS.

The N-terminal 27 residues, 1–27 (MAAFRMGKLTTIPAGLIYASINVRLAK), are a transit peptide targeting the mitochondrion. Over 28–110 (EEEPKKQLVR…YVYLKNPPQD (83 aa)) the chain is Mitochondrial intermembrane. A helical transmembrane segment spans residues 111-129 (FLPKMGVITASGLAGLLSA). The Mitochondrial matrix segment spans residues 130-137 (RKGSRFKK). The helical transmembrane segment at 138–155 (IAYPLGLATLGATVCYPA) threads the bilayer. At 156 to 265 (QSVIIAKITG…DDKDMYSTRS (110 aa)) the chain is on the mitochondrial intermembrane side. 2 disordered regions span residues 187–215 (SENE…PDLK) and 229–265 (VIKS…STRS). Ser204 is modified (phosphoserine). Residues 229-241 (VIKSESTSGTTQF) show a composition bias toward polar residues. The segment covering 246–265 (KLMDHGQSHPDDKDMYSTRS) has biased composition (basic and acidic residues).

This sequence belongs to the apolipoprotein O/MICOS complex subunit Mic27 family. As to quaternary structure, component of the mitochondrial contact site and cristae organizing system (MICOS) complex, composed of at least MICOS10/MIC10, CHCHD3/MIC19, CHCHD6/MIC25, APOOL/MIC27, IMMT/MIC60, APOO/MIC23/MIC26 and MICOS13/MIC13. This complex was also known under the names MINOS or MitOS complex. The MICOS complex associates with mitochondrial outer membrane proteins SAMM50, MTX1 and MTX2 (together described as components of the mitochondrial outer membrane sorting assembly machinery (SAM) complex) and DNAJC11, mitochondrial inner membrane protein TMEM11 and with HSPA9. The MICOS and SAM complexes together with DNAJC11 are part of a large protein complex spanning both membranes termed the mitochondrial intermembrane space bridging (MIB) complex. Interacts with MICOS10/MIC10, IMMT/MIC60 and APOO/MIC23/MIC26.

It localises to the mitochondrion inner membrane. Its subcellular location is the mitochondrion. In terms of biological role, component of the MICOS complex, a large protein complex of the mitochondrial inner membrane that plays crucial roles in the maintenance of crista junctions, inner membrane architecture, and formation of contact sites to the outer membrane. Specifically binds to cardiolipin (in vitro) but not to the precursor lipid phosphatidylglycerol. Plays a crucial role in crista junction formation and mitochondrial function. The chain is MICOS complex subunit Mic27 (Apool) from Mus musculus (Mouse).